The primary structure comprises 111 residues: Anti-adapter protein IraM (111 aa).

Belongs to the IraM/RssC family.

It is found in the cytoplasm. Functionally, inhibits RpoS proteolysis by regulating RssB activity, thereby increasing the stability of the sigma stress factor RpoS during magnesium starvation. In Escherichia coli O127:H6 (strain E2348/69 / EPEC), this protein is Anti-adapter protein IraM.